Consider the following 128-residue polypeptide: Anion exchange transporter (128 aa).

At 1-14 the chain is on the extracellular side; it reads LFSFKELNEQFKRK. The helical transmembrane segment at 15–35 threads the bilayer; it reads IKVVLPVDLVLIIAASFACYC. Residues 36-66 are Cytoplasmic-facing; that stretch reads TNMENTYGLEVVGHIPRGIPPPRAPPMNILS. Residues 67–87 form a helical membrane-spanning segment; sequence AVITEAFGVALVGYAASLALA. The Extracellular segment spans residues 88 to 103; the sequence is QGSAKKFKYSVDDNQE. The helical transmembrane segment at 104–124 threads the bilayer; sequence FLAHGLSNVISSFLFCIPSAA. The Cytoplasmic portion of the chain corresponds to 125-128; that stretch reads AMGR.

This sequence belongs to the SLC26A/SulP transporter (TC 2.A.53) family. In terms of tissue distribution, expressed in gastric epithelium, predominantly in the gastric parietal cells but also at lower levels in mucosal cells.

It is found in the basolateral cell membrane. The protein localises to the recycling endosome membrane. The protein resides in the apical cell membrane. It localises to the lateral cell membrane. The enzyme catalyses chloride(in) = chloride(out). It catalyses the reaction iodide(out) = iodide(in). The catalysed reaction is bromide(in) = bromide(out). It carries out the reaction oxalate(in) = oxalate(out). The enzyme catalyses nitrate(in) = nitrate(out). It catalyses the reaction sulfate(in) = sulfate(out). The catalysed reaction is D-gluconate(in) = D-gluconate(out). It carries out the reaction thiocyanate(in) = thiocyanate(out). The enzyme catalyses hydrogencarbonate(in) = hydrogencarbonate(out). It catalyses the reaction hydrogencarbonate(in) + chloride(out) = hydrogencarbonate(out) + chloride(in). Its function is as follows. Acts as an anion channel mediating the transport of chloride, bromide, iodide, nitrate, sulfate, gluconate, thiocyanate, oxalate and bicarbonate ions. Its permeability towards bicarbonate is weak and increases when pH is above 7. Mediates thiocyanate transport in retinal pigment epithelium cells. Mediates iodide transport in the thyroid gland, playing an important role in the synthesis of thyroid hormones and the maintenance of thyroid function. The polypeptide is Anion exchange transporter (Oryctolagus cuniculus (Rabbit)).